A 199-amino-acid polypeptide reads, in one-letter code: dTTP/UTP pyrophosphatase (199 aa).

Asp-75 serves as the catalytic Proton acceptor.

This sequence belongs to the Maf family. YhdE subfamily. A divalent metal cation serves as cofactor.

The protein resides in the cytoplasm. It catalyses the reaction dTTP + H2O = dTMP + diphosphate + H(+). The catalysed reaction is UTP + H2O = UMP + diphosphate + H(+). Nucleoside triphosphate pyrophosphatase that hydrolyzes dTTP and UTP. May have a dual role in cell division arrest and in preventing the incorporation of modified nucleotides into cellular nucleic acids. In Methylobacillus flagellatus (strain ATCC 51484 / DSM 6875 / VKM B-1610 / KT), this protein is dTTP/UTP pyrophosphatase.